We begin with the raw amino-acid sequence, 341 residues long: Holliday junction branch migration complex subunit RuvB (341 aa).

The disordered stretch occupies residues 1–22; it reads MSETAGKGVTMPEIMQSSYPDE. Positions 4–193 are large ATPase domain (RuvB-L); the sequence is TAGKGVTMPE…FGIISRLEFY (190 aa). Residues Ile32, Arg33, Gly74, Lys77, Thr78, Thr79, 140 to 142, Arg183, Tyr193, and Arg230 each bind ATP; that span reads EDY. Thr78 is a binding site for Mg(2+). Residues 194–264 are small ATPAse domain (RuvB-S); the sequence is TPEELSQIIL…LVNHALQKLD (71 aa). A head domain (RuvB-H) region spans residues 267–341; it reads EKGLDQMDRK…KAYKHLNLTD (75 aa). Positions 322 and 327 each coordinate DNA.

The protein belongs to the RuvB family. Homohexamer. Forms an RuvA(8)-RuvB(12)-Holliday junction (HJ) complex. HJ DNA is sandwiched between 2 RuvA tetramers; dsDNA enters through RuvA and exits via RuvB. An RuvB hexamer assembles on each DNA strand where it exits the tetramer. Each RuvB hexamer is contacted by two RuvA subunits (via domain III) on 2 adjacent RuvB subunits; this complex drives branch migration. In the full resolvosome a probable DNA-RuvA(4)-RuvB(12)-RuvC(2) complex forms which resolves the HJ.

It is found in the cytoplasm. The enzyme catalyses ATP + H2O = ADP + phosphate + H(+). The RuvA-RuvB-RuvC complex processes Holliday junction (HJ) DNA during genetic recombination and DNA repair, while the RuvA-RuvB complex plays an important role in the rescue of blocked DNA replication forks via replication fork reversal (RFR). RuvA specifically binds to HJ cruciform DNA, conferring on it an open structure. The RuvB hexamer acts as an ATP-dependent pump, pulling dsDNA into and through the RuvAB complex. RuvB forms 2 homohexamers on either side of HJ DNA bound by 1 or 2 RuvA tetramers; 4 subunits per hexamer contact DNA at a time. Coordinated motions by a converter formed by DNA-disengaged RuvB subunits stimulates ATP hydrolysis and nucleotide exchange. Immobilization of the converter enables RuvB to convert the ATP-contained energy into a lever motion, pulling 2 nucleotides of DNA out of the RuvA tetramer per ATP hydrolyzed, thus driving DNA branch migration. The RuvB motors rotate together with the DNA substrate, which together with the progressing nucleotide cycle form the mechanistic basis for DNA recombination by continuous HJ branch migration. Branch migration allows RuvC to scan DNA until it finds its consensus sequence, where it cleaves and resolves cruciform DNA. This is Holliday junction branch migration complex subunit RuvB from Lawsonia intracellularis (strain PHE/MN1-00).